The primary structure comprises 533 residues: Flavin-containing monooxygenase 5 (533 aa).

At Arg-5 the chain carries Dimethylated arginine. Residues 10-14 (GSGAS), Glu-33, and 41-42 (LW) each bind FAD. Ser-54 bears the Phosphoserine mark. Tyr-56 bears the Phosphotyrosine mark. A Phosphoserine modification is found at Ser-58. FAD is bound at residue 62 to 63 (NT). An NADP(+)-binding site is contributed by 196–199 (SGGD). Thr-284 carries the phosphothreonine modification. Ser-401 bears the Phosphoserine mark. A helical membrane pass occupies residues 513-533 (LVTVRVLMLAVTFLAVILAYF).

The protein belongs to the FMO family. The cofactor is FAD.

It is found in the microsome membrane. Its subcellular location is the endoplasmic reticulum membrane. The enzyme catalyses N,N-dimethylaniline + NADPH + O2 + H(+) = N,N-dimethylaniline N-oxide + NADP(+) + H2O. It catalyses the reaction NADPH + O2 + H(+) = H2O2 + NADP(+). It carries out the reaction heptan-2-one + NADPH + O2 + H(+) = pentyl acetate + NADP(+) + H2O. The catalysed reaction is octan-3-one + NADPH + O2 + H(+) = pentyl propanoate + NADP(+) + H2O. The enzyme catalyses octan-3-one + NADPH + O2 + H(+) = ethyl hexanoate + NADP(+) + H2O. It catalyses the reaction hexan-3-one + NADPH + O2 + H(+) = ethyl butanoate + NADP(+) + H2O. It carries out the reaction hexan-3-one + NADPH + O2 + H(+) = propyl propanoate + NADP(+) + H2O. The catalysed reaction is heptan-4-one + NADPH + O2 + H(+) = propyl butanoate + NADP(+) + H2O. The enzyme catalyses (2E)-geranial + NADPH + O2 + H(+) = (1E)-2,6-dimethylhepta-1,5-dien-1-yl formate + NADP(+) + H2O. It catalyses the reaction sulcatone + NADPH + O2 + H(+) = 4-methylpent-3-en-1-yl acetate + NADP(+) + H2O. Acts as a Baeyer-Villiger monooxygenase on a broad range of substrates. Catalyzes the insertion of an oxygen atom into a carbon-carbon bond adjacent to a carbonyl, which converts ketones to esters. Active on diverse carbonyl compounds, whereas soft nucleophiles are mostly non- or poorly reactive. In contrast with other forms of FMO it is non- or poorly active on 'classical' substrates such as drugs, pesticides, and dietary components containing soft nucleophilic heteroatoms. Able to oxidize drug molecules bearing a carbonyl group on an aliphatic chain, such as nabumetone and pentoxifylline. Also, in the absence of substrates, shows slow but yet significant NADPH oxidase activity. Acts as a positive modulator of cholesterol biosynthesis as well as glucose homeostasis, promoting metabolic aging via pleiotropic effects. In Rattus norvegicus (Rat), this protein is Flavin-containing monooxygenase 5.